The sequence spans 214 residues: Adenylate kinase (214 aa).

10-15 contributes to the ATP binding site; the sequence is GAGKGT. Positions 30–59 are NMP; the sequence is STGDMLRAAIKAGSELGNKAKAVMDAGQLV. AMP is bound by residues T31, R36, 57-59, 85-88, and Q92; these read QLV and GFPR. Residues 122–159 are LID; sequence GRRVHSGSGRVYHLVYNPPKVEGKDDVSGDDLSIRPDD. Residues R123 and 132 to 133 contribute to the ATP site; that span reads VY. AMP-binding residues include R156 and R167. Q200 provides a ligand contact to ATP.

It belongs to the adenylate kinase family. Monomer.

It localises to the cytoplasm. The enzyme catalyses AMP + ATP = 2 ADP. It functions in the pathway purine metabolism; AMP biosynthesis via salvage pathway; AMP from ADP: step 1/1. Its function is as follows. Catalyzes the reversible transfer of the terminal phosphate group between ATP and AMP. Plays an important role in cellular energy homeostasis and in adenine nucleotide metabolism. This is Adenylate kinase from Colwellia psychrerythraea (strain 34H / ATCC BAA-681) (Vibrio psychroerythus).